The sequence spans 238 residues: Lactate utilization protein A (238 aa).

The protein belongs to the LutA/YkgE family.

In terms of biological role, is essential for L-lactate degradation and allows cells to grow with lactate as the sole carbon source. May also allow cells to utilize an alternative carbon source during biofilm formation, since it contributes to the formation of architecturally complex communities when lactate is present. The sequence is that of Lactate utilization protein A (lutA) from Bacillus subtilis (strain 168).